A 1097-amino-acid chain; its full sequence is DNA polymerase catalytic subunit (1097 aa).

Residues 1069–1097 form a disordered region; that stretch reads RGGDDSDGGDSEKENMDTERSSSHEAMET. Positions 1078–1097 are enriched in basic and acidic residues; that stretch reads DSEKENMDTERSSSHEAMET.

Belongs to the DNA polymerase type-B family.

It localises to the host nucleus. The catalysed reaction is DNA(n) + a 2'-deoxyribonucleoside 5'-triphosphate = DNA(n+1) + diphosphate. The polypeptide is DNA polymerase catalytic subunit (UL54) (Murid herpesvirus 1 (strain Smith) (MuHV-1)).